Reading from the N-terminus, the 642-residue chain is Chaperone protein HtpG (642 aa).

Positions 1–350 (MATDTQKETL…SNDLSLNVSR (350 aa)) are a; substrate-binding. A b region spans residues 351–567 (EILQNDHAVD…EYDMGLQMRR (217 aa)). Positions 568 to 642 (LLEQAGQKLP…MNKLIVQLSK (75 aa)) are c.

The protein belongs to the heat shock protein 90 family. As to quaternary structure, homodimer.

The protein localises to the cytoplasm. In terms of biological role, molecular chaperone. Has ATPase activity. This Marinomonas sp. (strain MWYL1) protein is Chaperone protein HtpG.